The sequence spans 240 residues: Adenylate dimethylallyltransferase (240 aa).

Belongs to the isopentenyl transferase family.

The catalysed reaction is dimethylallyl diphosphate + AMP = N(6)-(dimethylallyl)adenosine 5'-phosphate + diphosphate. In terms of biological role, transfers dimethylallyl groups to AMP as part of the biosynthesis of cytokinin phytohormones. The protein is Adenylate dimethylallyltransferase (ipt) of Agrobacterium vitis (Rhizobium vitis).